The following is a 351-amino-acid chain: Dihydroorotate dehydrogenase (quinone) (351 aa).

Residues 67–71 (AGFDK) and threonine 91 contribute to the FMN site. Lysine 71 contacts substrate. 116–120 (NAMGF) is a binding site for substrate. The FMN site is built by asparagine 145 and asparagine 178. Asparagine 178 contributes to the substrate binding site. Catalysis depends on serine 181, which acts as the Nucleophile. Asparagine 183 contributes to the substrate binding site. FMN contacts are provided by lysine 214 and threonine 242. 243–244 (NT) is a binding site for substrate. FMN contacts are provided by residues glycine 262, glycine 291, and 312-313 (YS).

This sequence belongs to the dihydroorotate dehydrogenase family. Type 2 subfamily. Monomer. The cofactor is FMN.

It localises to the cell membrane. The catalysed reaction is (S)-dihydroorotate + a quinone = orotate + a quinol. It functions in the pathway pyrimidine metabolism; UMP biosynthesis via de novo pathway; orotate from (S)-dihydroorotate (quinone route): step 1/1. Catalyzes the conversion of dihydroorotate to orotate with quinone as electron acceptor. The protein is Dihydroorotate dehydrogenase (quinone) (pyrD) of Helicobacter pylori (strain ATCC 700392 / 26695) (Campylobacter pylori).